The chain runs to 405 residues: MRGVIRKLNDDGFGVLKGILVPFSAPGDEIIVERVERVKKRRVASQWKLVRSSPLRVGPRCKAFGKCGGCTLQHLNYDYQLEFKRKKLKRILGFEVEVVPSPKIFGHRNRIDLAITKDGIGFRERGKWWKIVDIDECPVFGKTSREAIERLKEFIEEEKISVWNIKKDEGFLRYMVLREGKFTEEVMVNFVTKEGNLPDPTNYFDFDSIYWSVNRSKSDVSYGDIERFWGKEFIRERLDDVDYLIHPNSFFQTNSYQAVNLVRKVSELVEGEKILDMYSGVGTFGIYLAKRGFNVKGFDSNEFAIEMARRNVEINNVDAEFEVASDREVSVKGFDTVIVDPPRAGLHPRLVKRLNREKPGVIVYVSCNPETFARDVKMLDYRIDEIVALDMFPHTPHVELVAKLV.

Positions 61, 67, 70, and 137 each coordinate [4Fe-4S] cluster. Residues Gln-252, Tyr-278, Thr-283, 299 to 300 (DS), Asp-326, and Asp-340 contribute to the S-adenosyl-L-methionine site. Cys-367 (nucleophile) is an active-site residue. Catalysis depends on Glu-399, which acts as the Proton acceptor.

The protein belongs to the class I-like SAM-binding methyltransferase superfamily. RNA M5U methyltransferase family.

The catalysed reaction is uridine(54) in tRNA + S-adenosyl-L-methionine = 5-methyluridine(54) in tRNA + S-adenosyl-L-homocysteine + H(+). Activated by magnesium ions. In terms of biological role, catalyzes the formation of 5-methyl-uridine at position 54 (m5U54) in tRNA. The protein is tRNA (uracil(54)-C(5))-methyltransferase of Pyrococcus abyssi (strain GE5 / Orsay).